The sequence spans 877 residues: Translation initiation factor IF-2 (877 aa).

A disordered region spans residues 48–289 (SSFQNSAPAE…QITKRKERPL (242 aa)). Residues 78-89 (RKNEKKPEENNT) are compositionally biased toward basic and acidic residues. The span at 92–101 (KSNRRRNNKR) shows a compositional bias: basic residues. A compositionally biased stretch (basic and acidic residues) spans 102–116 (RSSDRARDNKERDAK). Positions 123 to 132 (KAAALLQQFK) are enriched in low complexity. Basic and acidic residues-rich tracts occupy residues 135 to 155 (QRAE…EYHE) and 162 to 189 (KEQS…EKKV). Residues 277–286 (PRKQITKRKE) show a composition bias toward basic residues. The region spanning 378–547 (KRPPVVTIMG…LLQADVMELK (170 aa)) is the tr-type G domain. Positions 387-394 (GHVDHGKT) are G1. 387–394 (GHVDHGKT) contacts GTP. The G2 stretch occupies residues 412–416 (GITQR). A G3 region spans residues 433-436 (DTPG). GTP is bound by residues 433-437 (DTPGH) and 487-490 (NKMD). Positions 487–490 (NKMD) are G4. A G5 region spans residues 523–525 (SAK).

It belongs to the TRAFAC class translation factor GTPase superfamily. Classic translation factor GTPase family. IF-2 subfamily.

It localises to the cytoplasm. Its function is as follows. One of the essential components for the initiation of protein synthesis. Protects formylmethionyl-tRNA from spontaneous hydrolysis and promotes its binding to the 30S ribosomal subunits. Also involved in the hydrolysis of GTP during the formation of the 70S ribosomal complex. The chain is Translation initiation factor IF-2 from Lactobacillus acidophilus (strain ATCC 700396 / NCK56 / N2 / NCFM).